The following is a 333-amino-acid chain: Fructose-1,6-bisphosphatase class 1 1 (333 aa).

4 residues coordinate Mg(2+): E81, D100, L102, and D103. Substrate contacts are provided by residues 103-106 (DGSS) and N191. Residue E263 participates in Mg(2+) binding.

This sequence belongs to the FBPase class 1 family. As to quaternary structure, homotetramer. Mg(2+) serves as cofactor.

The protein localises to the cytoplasm. The catalysed reaction is beta-D-fructose 1,6-bisphosphate + H2O = beta-D-fructose 6-phosphate + phosphate. The protein operates within carbohydrate biosynthesis; Calvin cycle. This chain is Fructose-1,6-bisphosphatase class 1 1, found in Cereibacter sphaeroides (strain ATCC 17025 / ATH 2.4.3) (Rhodobacter sphaeroides).